We begin with the raw amino-acid sequence, 246 residues long: Ubiquitin-conjugating enzyme E2 6 (246 aa).

Over 1–224 (MATKQAQKRL…LEKQHNDKPN (224 aa)) the chain is Cytoplasmic. In terms of domain architecture, UBC core spans 5–154 (QAQKRLTKEY…FNSTRFKLVF (150 aa)). The Glycyl thioester intermediate role is filled by Cys87. Residues 225 to 245 (GSSSMFYIGVALFLFLVGLFM) traverse the membrane as a helical segment.

This sequence belongs to the ubiquitin-conjugating enzyme family.

It is found in the endoplasmic reticulum membrane. The enzyme catalyses S-ubiquitinyl-[E1 ubiquitin-activating enzyme]-L-cysteine + [E2 ubiquitin-conjugating enzyme]-L-cysteine = [E1 ubiquitin-activating enzyme]-L-cysteine + S-ubiquitinyl-[E2 ubiquitin-conjugating enzyme]-L-cysteine.. The protein operates within protein modification; protein ubiquitination. Its function is as follows. Catalyzes the covalent attachment of ubiquitin to other proteins. Functions in degradation of misfolded or regulated proteins localized in the endoplasmic reticulum (ER) lumen or membrane via the ubiquitin-proteasome system. Cognate E2 conjugating enzyme for the DOA10 ubiquitin ligase complex, which is part of the ERAD-C pathway responsible for the rapid degradation of membrane proteins with misfolded cytoplasmic domains. In Candida glabrata (strain ATCC 2001 / BCRC 20586 / JCM 3761 / NBRC 0622 / NRRL Y-65 / CBS 138) (Yeast), this protein is Ubiquitin-conjugating enzyme E2 6 (UBC6).